The chain runs to 808 residues: Sucrose synthase 2 (808 aa).

Ser-10 carries the post-translational modification Phosphoserine; by CPK. The interval 272–749 is GT-B glycosyltransferase; sequence MMFNVVILSP…GLQRIYEKYT (478 aa).

Belongs to the glycosyltransferase 1 family. Plant sucrose synthase subfamily. In terms of assembly, homotetramer or heterotetramer with SUS1. Phosphorylated at Ser-10 by CPK23 in developing seeds. Predominantly expressed in the leaf tissues. Expressed in seeds, and at lower levels in roots. Expressed in leaf mesophyll and phloem (at protein level).

It carries out the reaction an NDP-alpha-D-glucose + D-fructose = a ribonucleoside 5'-diphosphate + sucrose + H(+). With respect to regulation, activated by phosphorylation at Ser-10 by CPK23. Sucrose-cleaving enzyme that provides UDP-glucose and fructose for various metabolic pathways. Functions in developing seeds by supplying substrates for the biosynthesis of storage products. The polypeptide is Sucrose synthase 2 (SUS2) (Oryza sativa subsp. japonica (Rice)).